Consider the following 335-residue polypeptide: Methionine import ATP-binding protein MetN (335 aa).

Positions 2–241 (IEFQRLHKSY…PKHVTTRRFV (240 aa)) constitute an ABC transporter domain. An ATP-binding site is contributed by 38–45 (GHSGAGKS).

Belongs to the ABC transporter superfamily. Methionine importer (TC 3.A.1.24) family. The complex is composed of two ATP-binding proteins (MetN), two transmembrane proteins (MetI) and a solute-binding protein (MetQ).

It is found in the cell inner membrane. It carries out the reaction L-methionine(out) + ATP + H2O = L-methionine(in) + ADP + phosphate + H(+). The catalysed reaction is D-methionine(out) + ATP + H2O = D-methionine(in) + ADP + phosphate + H(+). Its function is as follows. Part of the ABC transporter complex MetNIQ involved in methionine import. Responsible for energy coupling to the transport system. The protein is Methionine import ATP-binding protein MetN of Xanthomonas oryzae pv. oryzae (strain KACC10331 / KXO85).